The chain runs to 459 residues: Bifunctional protein GlmU (459 aa).

The segment at 1 to 229 (MSNFAIXLAA…FDESLGVNDR (229 aa)) is pyrophosphorylase. UDP-N-acetyl-alpha-D-glucosamine contacts are provided by residues 8-11 (LAAG), lysine 22, glutamine 72, and 77-78 (GT). A Mg(2+)-binding site is contributed by aspartate 102. Residues glycine 139, glutamate 154, asparagine 169, and asparagine 227 each contribute to the UDP-N-acetyl-alpha-D-glucosamine site. A Mg(2+)-binding site is contributed by asparagine 227. Positions 230-250 (VALATAESVMRRRINHKHMVN) are linker. An N-acetyltransferase region spans residues 251–459 (GVSFVNPEAT…TRLPHHPKNQ (209 aa)). The UDP-N-acetyl-alpha-D-glucosamine site is built by arginine 332 and lysine 350. Residue histidine 362 is the Proton acceptor of the active site. 2 residues coordinate UDP-N-acetyl-alpha-D-glucosamine: tyrosine 365 and asparagine 376. Residues alanine 379, 385–386 (NY), serine 404, alanine 422, and arginine 439 contribute to the acetyl-CoA site.

In the N-terminal section; belongs to the N-acetylglucosamine-1-phosphate uridyltransferase family. It in the C-terminal section; belongs to the transferase hexapeptide repeat family. As to quaternary structure, homotrimer. Mg(2+) is required as a cofactor.

It is found in the cytoplasm. It carries out the reaction alpha-D-glucosamine 1-phosphate + acetyl-CoA = N-acetyl-alpha-D-glucosamine 1-phosphate + CoA + H(+). The enzyme catalyses N-acetyl-alpha-D-glucosamine 1-phosphate + UTP + H(+) = UDP-N-acetyl-alpha-D-glucosamine + diphosphate. It participates in nucleotide-sugar biosynthesis; UDP-N-acetyl-alpha-D-glucosamine biosynthesis; N-acetyl-alpha-D-glucosamine 1-phosphate from alpha-D-glucosamine 6-phosphate (route II): step 2/2. Its pathway is nucleotide-sugar biosynthesis; UDP-N-acetyl-alpha-D-glucosamine biosynthesis; UDP-N-acetyl-alpha-D-glucosamine from N-acetyl-alpha-D-glucosamine 1-phosphate: step 1/1. The protein operates within bacterial outer membrane biogenesis; LPS lipid A biosynthesis. Functionally, catalyzes the last two sequential reactions in the de novo biosynthetic pathway for UDP-N-acetylglucosamine (UDP-GlcNAc). The C-terminal domain catalyzes the transfer of acetyl group from acetyl coenzyme A to glucosamine-1-phosphate (GlcN-1-P) to produce N-acetylglucosamine-1-phosphate (GlcNAc-1-P), which is converted into UDP-GlcNAc by the transfer of uridine 5-monophosphate (from uridine 5-triphosphate), a reaction catalyzed by the N-terminal domain. The polypeptide is Bifunctional protein GlmU (Streptococcus pneumoniae serotype 19F (strain G54)).